Here is a 333-residue protein sequence, read N- to C-terminus: Ribosomal RNA small subunit methyltransferase H (333 aa).

S-adenosyl-L-methionine contacts are provided by residues 31-33, aspartate 49, phenylalanine 76, aspartate 134, and glutamine 141; that span reads GGY.

It belongs to the methyltransferase superfamily. RsmH family.

Its subcellular location is the cytoplasm. The enzyme catalyses cytidine(1402) in 16S rRNA + S-adenosyl-L-methionine = N(4)-methylcytidine(1402) in 16S rRNA + S-adenosyl-L-homocysteine + H(+). Its function is as follows. Specifically methylates the N4 position of cytidine in position 1402 (C1402) of 16S rRNA. The polypeptide is Ribosomal RNA small subunit methyltransferase H (Wolbachia sp. subsp. Brugia malayi (strain TRS)).